A 237-amino-acid chain; its full sequence is Ribose-5-phosphate isomerase A (237 aa).

Substrate-binding positions include 32 to 35 (TGRT), 85 to 88 (DGAD), and 99 to 102 (KGGG). Glu108 functions as the Proton acceptor in the catalytic mechanism. Arg126 is a substrate binding site.

Belongs to the ribose 5-phosphate isomerase family. In terms of assembly, homodimer.

The catalysed reaction is aldehydo-D-ribose 5-phosphate = D-ribulose 5-phosphate. It functions in the pathway carbohydrate degradation; pentose phosphate pathway; D-ribose 5-phosphate from D-ribulose 5-phosphate (non-oxidative stage): step 1/1. In terms of biological role, catalyzes the reversible conversion of ribose-5-phosphate to ribulose 5-phosphate. This Aeropyrum pernix (strain ATCC 700893 / DSM 11879 / JCM 9820 / NBRC 100138 / K1) protein is Ribose-5-phosphate isomerase A.